The chain runs to 209 residues: Kynurenine formamidase (209 aa).

Tryptophan 20 serves as a coordination point for substrate. Zn(2+)-binding residues include histidine 50, histidine 54, and aspartate 56. The Proton donor/acceptor role is filled by histidine 60. Zn(2+) contacts are provided by histidine 161 and glutamate 173.

It belongs to the Cyclase 1 superfamily. KynB family. Homodimer. Zn(2+) serves as cofactor.

The enzyme catalyses N-formyl-L-kynurenine + H2O = L-kynurenine + formate + H(+). It functions in the pathway amino-acid degradation; L-tryptophan degradation via kynurenine pathway; L-kynurenine from L-tryptophan: step 2/2. Catalyzes the hydrolysis of N-formyl-L-kynurenine to L-kynurenine, the second step in the kynurenine pathway of tryptophan degradation. The polypeptide is Kynurenine formamidase (Bacillus mycoides (strain KBAB4) (Bacillus weihenstephanensis)).